Here is a 344-residue protein sequence, read N- to C-terminus: Putative cyclin-Y-like protein 3 (344 aa).

Positions 40–170 (ERYANRSLAI…FLELLEFNIH (131 aa)) constitute a Cyclin N-terminal domain.

This sequence belongs to the cyclin family. Cyclin Y subfamily.

The sequence is that of Putative cyclin-Y-like protein 3 (CCNYL3) from Homo sapiens (Human).